The primary structure comprises 71 residues: uncharacterized protein (71 aa).

The protein belongs to the ycf40 family.

It localises to the plastid. Its subcellular location is the chloroplast. This is an uncharacterized protein from Pyropia yezoensis (Susabi-nori).